The primary structure comprises 492 residues: Fumarate hydratase 1, mitochondrial (492 aa).

The N-terminal 28 residues, 1 to 28 (MSIYVASRRLSGGTTVTALRYATSLRSY), are a transit peptide targeting the mitochondrion. Residues 127–129 (SGT), 157–160 (HPND), 167–169 (SSN), and Thr-215 contribute to the substrate site. The active-site Proton donor/acceptor is the His-216. Residue Ser-346 is part of the active site. Substrate contacts are provided by residues Ser-347 and 352-354 (KVN).

Belongs to the class-II fumarase/aspartase family. Fumarase subfamily. Homotetramer.

The protein localises to the mitochondrion. The catalysed reaction is (S)-malate = fumarate + H2O. It participates in carbohydrate metabolism; tricarboxylic acid cycle; (S)-malate from fumarate: step 1/1. With respect to regulation, fumarate hydratase activity (fumarate to L-malate) is strongly inhibited by phosphoenolpyruvate, citrate, oxaloacetate, ATP and ADP. Malate dehydratase activity (malate to fumarate) is activated by oxaloacetate, pyruvate, Asn and Gln. Malate dehydratase activity (malate to fumarate) is inhibited by citrate, succinate, ADP, ATP, glucose-6P and phosphoenolpyruvate. Functionally, catalyzes the reversible stereospecific interconversion of fumarate to L-malate. Catalyzes the hydration of fumarate to L-malate in the tricarboxylic acid (TCA) cycle to facilitate a transition step in the production of energy in the form of NADH. This Arabidopsis thaliana (Mouse-ear cress) protein is Fumarate hydratase 1, mitochondrial.